Here is a 411-residue protein sequence, read N- to C-terminus: Corticotropin-releasing factor receptor 2 (411 aa).

The not cleaved signal peptide spans Met1–Ala19. Over Met1–Lys108 the chain is Extracellular. N-linked (GlcNAc...) asparagine glycans are attached at residues Asn13, Asn41, Asn74, Asn86, and Asn94. 4 disulfides stabilise this stretch: Cys14-Cys50, Cys40-Cys83, Trp51-Arg77, and Cys64-Cys98. The chain crosses the membrane as a helical span at residues Tyr109 to Leu139. Residues Ala140–Cys146 are Cytoplasmic-facing. The helical transmembrane segment at Leu147–Leu171 threads the bilayer. The Extracellular segment spans residues Val172–Arg185. The cysteines at positions 184 and 254 are disulfide-linked. A helical transmembrane segment spans residues Cys186–Val214. The Cytoplasmic segment spans residues Met215 to Arg221. A helical transmembrane segment spans residues Leu222–Tyr249. Residues Glu250 to Asp265 lie on the Extracellular side of the membrane. The helical transmembrane segment at Tyr266–Met291 threads the bilayer. Over Thr292–Thr302 the chain is Cytoplasmic. A helical transmembrane segment spans residues Ile303–Phe327. Residues Val328–Asp334 are Extracellular-facing. Residues Leu335–Gly364 traverse the membrane as a helical segment. The Cytoplasmic segment spans residues Glu365–Val411.

The protein belongs to the G-protein coupled receptor 2 family. In terms of assembly, monomer. Interacts (via N-terminal extracellular domain) with CRF, UCN, UCN2 and UCN3. Has highest affinity for UCN, and considerably lower affinity for CRF, UNC2 and UCN3. An N-glycosylation site within the signal peptide impedes its proper cleavage and function.

Its subcellular location is the cell membrane. G-protein coupled receptor for CRH (corticotropin-releasing factor), UCN (urocortin), UCN2 and UCN3. Has high affinity for UCN. Ligand binding causes a conformation change that triggers signaling via guanine nucleotide-binding proteins (G proteins) and down-stream effectors, such as adenylate cyclase. Promotes the activation of adenylate cyclase, leading to increased intracellular cAMP levels. The sequence is that of Corticotropin-releasing factor receptor 2 (CRHR2) from Homo sapiens (Human).